Reading from the N-terminus, the 192-residue chain is MSERNSAVLELLNEDDVSRTIARIAHQIIEKTALDSKDADRVMLLGIPSGGVPLARRLAEKIEEFSGVSVDTGAVDITLYRDDLRNKPHRALQPTSIPAGGIDNTTVILVDDVLFSGRTIRAALDALRDVGRPNYIQLAVLVDRGHRQLPIRADYVGKNLPTARAEDVSVMLTEIDGRDAVTLTREDSEGDS.

Substrate-binding positions include serine 49–glycine 50, arginine 90, aspartate 111–threonine 119, arginine 144, and valine 168. Positions valine 107–threonine 119 match the PRPP-binding motif.

This sequence belongs to the purine/pyrimidine phosphoribosyltransferase family. PyrR subfamily.

It carries out the reaction UMP + diphosphate = 5-phospho-alpha-D-ribose 1-diphosphate + uracil. In terms of biological role, regulates the transcription of the pyrimidine nucleotide (pyr) operon in response to exogenous pyrimidines. Functionally, also displays a weak uracil phosphoribosyltransferase activity which is not physiologically significant. This chain is Bifunctional protein PyrR, found in Corynebacterium glutamicum (strain ATCC 13032 / DSM 20300 / JCM 1318 / BCRC 11384 / CCUG 27702 / LMG 3730 / NBRC 12168 / NCIMB 10025 / NRRL B-2784 / 534).